Consider the following 358-residue polypeptide: Ion-translocating oxidoreductase complex subunit D (358 aa).

3 helical membrane-spanning segments follow: residues 24–44 (ILAM…GVVL), 79–99 (LTAL…IIII), and 125–145 (IGYV…MPPI). T186 bears the FMN phosphoryl threonine mark. Transmembrane regions (helical) follow at residues 220–240 (FAQG…FLIL), 248–268 (IPVA…FTGF), 271–291 (LSAI…FIAT), 297–317 (SITP…VYLI), and 321–341 (GNYP…VPLI).

It belongs to the NqrB/RnfD family. As to quaternary structure, the complex is composed of six subunits: RnfA, RnfB, RnfC, RnfD, RnfE and RnfG. FMN is required as a cofactor.

It localises to the cell inner membrane. In terms of biological role, part of a membrane-bound complex that couples electron transfer with translocation of ions across the membrane. This chain is Ion-translocating oxidoreductase complex subunit D, found in Haemophilus influenzae (strain ATCC 51907 / DSM 11121 / KW20 / Rd).